An 89-amino-acid polypeptide reads, in one-letter code: MTLSKEHKAAVITQFGGNDKNTGKTEVQVALFSRRITELTGHLQQHPKDKHSRRGLLMIVGKRKKALKYLQQVNIARYRQVLADLDLRK.

The protein belongs to the universal ribosomal protein uS15 family. In terms of assembly, part of the 30S ribosomal subunit. Forms a bridge to the 50S subunit in the 70S ribosome, contacting the 23S rRNA.

Functionally, one of the primary rRNA binding proteins, it binds directly to 16S rRNA where it helps nucleate assembly of the platform of the 30S subunit by binding and bridging several RNA helices of the 16S rRNA. Its function is as follows. Forms an intersubunit bridge (bridge B4) with the 23S rRNA of the 50S subunit in the ribosome. The sequence is that of Small ribosomal subunit protein uS15 from Chlorobium luteolum (strain DSM 273 / BCRC 81028 / 2530) (Pelodictyon luteolum).